Here is a 112-residue protein sequence, read N- to C-terminus: Nitrogen regulatory protein P-II (112 aa).

The residue at position 51 (tyrosine 51) is an O-UMP-tyrosine.

It belongs to the P(II) protein family. Homotrimer. Post-translationally, uridylylated/deuridylylated by GlnD.

Functionally, P-II indirectly controls the transcription of the glutamine synthetase gene (GlnA). P-II prevents NR-II-catalyzed conversion of NR-I to NR-I-phosphate, the transcriptional activator of GlnA. When P-II is uridylylated to P-II-UMP, these events are reversed. When the ratio of Gln to 2-ketoglutarate decreases, P-II is uridylylated to P-II-UMP, which causes the deadenylation of glutamine synthetase by GlnE, so activating the enzyme. The polypeptide is Nitrogen regulatory protein P-II (glnB) (Haemophilus influenzae (strain ATCC 51907 / DSM 11121 / KW20 / Rd)).